The sequence spans 230 residues: Small ribosomal subunit protein uS3 (230 aa).

One can recognise a KH type-2 domain in the interval 39–107 (VRNYLRQKLA…PVHVNIEEIR (69 aa)). Residues 210-230 (SSKPEHESKQRKAGRRNAAAN) form a disordered region.

The protein belongs to the universal ribosomal protein uS3 family. As to quaternary structure, part of the 30S ribosomal subunit. Forms a tight complex with proteins S10 and S14.

Its function is as follows. Binds the lower part of the 30S subunit head. Binds mRNA in the 70S ribosome, positioning it for translation. The chain is Small ribosomal subunit protein uS3 from Neisseria meningitidis serogroup C (strain 053442).